The primary structure comprises 137 residues: Phosphoribosyl-AMP cyclohydrolase (137 aa).

Residue D84 participates in Mg(2+) binding. Residue C85 coordinates Zn(2+). D86 and D88 together coordinate Mg(2+). Residues C101 and C108 each coordinate Zn(2+).

It belongs to the PRA-CH family. As to quaternary structure, homodimer. Mg(2+) is required as a cofactor. It depends on Zn(2+) as a cofactor.

It is found in the cytoplasm. The catalysed reaction is 1-(5-phospho-beta-D-ribosyl)-5'-AMP + H2O = 1-(5-phospho-beta-D-ribosyl)-5-[(5-phospho-beta-D-ribosylamino)methylideneamino]imidazole-4-carboxamide. It participates in amino-acid biosynthesis; L-histidine biosynthesis; L-histidine from 5-phospho-alpha-D-ribose 1-diphosphate: step 3/9. In terms of biological role, catalyzes the hydrolysis of the adenine ring of phosphoribosyl-AMP. The polypeptide is Phosphoribosyl-AMP cyclohydrolase (Chlorobium limicola (strain DSM 245 / NBRC 103803 / 6330)).